A 304-amino-acid polypeptide reads, in one-letter code: MALPITNGTLFMPFVLTFIGIPGFESVQCWIGIPFCATYVIALIGNSLLLIIIKSEPSLHEPMYIFLATLGATDISLSTSIVPKMLDIFWFHLPEIYFDACLFQMWLIHTFQGIESGVLLAMALDRCVAICYPLRRAIVFTRQLVTYIVVGVTLRPAILVIPCLLLIKCHLKLYRTKLIYHTYCERVALVKLATEDVYINKVYGILGAFIVGGLDFIFITLSYIQIFITVFHLPLKEARLKVFNTCIPHIYVFFQFYLLAFFFIFYSQIWILYPIICTYHLVQSLPTGPTIPQPLYLWVKDQTH.

Topologically, residues 1–32 (MALPITNGTLFMPFVLTFIGIPGFESVQCWIG) are extracellular. A glycan (N-linked (GlcNAc...) asparagine) is linked at Asn7. Residues 33–53 (IPFCATYVIALIGNSLLLIII) traverse the membrane as a helical segment. The Cytoplasmic segment spans residues 54–61 (KSEPSLHE). Residues 62–82 (PMYIFLATLGATDISLSTSIV) traverse the membrane as a helical segment. Over 83-103 (PKMLDIFWFHLPEIYFDACLF) the chain is Extracellular. An intrachain disulfide couples Cys101 to Cys184. Residues 104-124 (QMWLIHTFQGIESGVLLAMAL) traverse the membrane as a helical segment. Topologically, residues 125–146 (DRCVAICYPLRRAIVFTRQLVT) are cytoplasmic. The helical transmembrane segment at 147-167 (YIVVGVTLRPAILVIPCLLLI) threads the bilayer. Over 168-203 (KCHLKLYRTKLIYHTYCERVALVKLATEDVYINKVY) the chain is Extracellular. The helical transmembrane segment at 204–224 (GILGAFIVGGLDFIFITLSYI) threads the bilayer. Over 225–255 (QIFITVFHLPLKEARLKVFNTCIPHIYVFFQ) the chain is Cytoplasmic. The chain crosses the membrane as a helical span at residues 256–276 (FYLLAFFFIFYSQIWILYPII). At 277–279 (CTY) the chain is on the extracellular side. A helical membrane pass occupies residues 280-300 (HLVQSLPTGPTIPQPLYLWVK). Topologically, residues 301-304 (DQTH) are cytoplasmic.

Belongs to the G-protein coupled receptor 1 family.

The protein localises to the cell membrane. In terms of biological role, odorant receptor. This is Olfactory receptor 52A4 from Homo sapiens (Human).